The primary structure comprises 348 residues: 4-hydroxyphenylpyruvate dioxygenase (348 aa).

2 consecutive VOC domains span residues 11-141 (GFAF…ITSP) and 151-303 (AIDH…IFTE). 3 residues coordinate Fe cation: H154, H232, and E312.

Belongs to the 4HPPD family. Requires Fe cation as cofactor.

The enzyme catalyses 3-(4-hydroxyphenyl)pyruvate + O2 = homogentisate + CO2. Catalyzes the transformation of p-hydroxyphenylpyruvate into HGA. Has hemolytic and brown pigment production activity. The protein is 4-hydroxyphenylpyruvate dioxygenase (lly) of Legionella pneumophila subsp. pneumophila (strain Philadelphia 1 / ATCC 33152 / DSM 7513).